The chain runs to 476 residues: MRVLHVCSELFPLLKTGGLADVIGALPAAQLAEGADVRIILPAFPDLRRGIPETVLVREIDTFAGRVALRYGHYRGIGIYLIDAPALYDRAGSPYHDASLYAYSDNYLRFALLGWMACELACGLDGYWRPEVVHAHDWHAGLTCAYLAARGRPARSVFTVHNLAYQGLFSADHLSELHLPAEFFQIYGLEFYGQISYLKAGLFFADHVTTVSPTYAKEITQPAFGYGMEGLLQALARQGRLTGILNGVDSDIWDPQSDTLLPTRYDAENLQAKAINKTHLQTAMGLQLAENKPIFAVVSRLTVQKGLDLVLEALPELLALGGQLVVLGSGDATLQEAFLAAAAEHSGQVGVQIGYHEAFSHRIIAGSDVILVPSRFEPCGLTQLYGLKYGTLPLVRHTGGLADTVVDCALENLADGSASGFVFNECEAQALVKAIRRAFVLWSRPKHWRHVQRHAMRLDFGWQLAAVDYLSLYRRL.

Lysine 15 contacts ADP-alpha-D-glucose.

This sequence belongs to the glycosyltransferase 1 family. Bacterial/plant glycogen synthase subfamily.

The enzyme catalyses [(1-&gt;4)-alpha-D-glucosyl](n) + ADP-alpha-D-glucose = [(1-&gt;4)-alpha-D-glucosyl](n+1) + ADP + H(+). It participates in glycan biosynthesis; glycogen biosynthesis. Functionally, synthesizes alpha-1,4-glucan chains using ADP-glucose. This is Glycogen synthase from Yersinia pestis bv. Antiqua (strain Antiqua).